Reading from the N-terminus, the 200-residue chain is Probable GTP-binding protein EngB (200 aa).

The EngB-type G domain maps to 22-199; sequence GLDEIALAGR…KDWIQARLYE (178 aa). Residues 30–37, 57–61, 78–81, 145–148, and 178–180 each bind GTP; these read GRSNVGKS, GKTQT, DVPG, TKMD, and FSS. 2 residues coordinate Mg(2+): serine 37 and threonine 59.

This sequence belongs to the TRAFAC class TrmE-Era-EngA-EngB-Septin-like GTPase superfamily. EngB GTPase family. Mg(2+) serves as cofactor.

Necessary for normal cell division and for the maintenance of normal septation. The sequence is that of Probable GTP-binding protein EngB from Lactobacillus delbrueckii subsp. bulgaricus (strain ATCC 11842 / DSM 20081 / BCRC 10696 / JCM 1002 / NBRC 13953 / NCIMB 11778 / NCTC 12712 / WDCM 00102 / Lb 14).